We begin with the raw amino-acid sequence, 331 residues long: UPF0194 membrane protein YbhG (331 aa).

The first 15 residues, 1-15 (MKKPVVIGLAVVVLA), serve as a signal peptide directing secretion. Positions 107–208 (EEIAQAAAAV…LNLQDSTLIA (102 aa)) form a coiled coil.

It belongs to the UPF0194 family.

The protein localises to the periplasm. The polypeptide is UPF0194 membrane protein YbhG (Escherichia coli O157:H7 (strain EC4115 / EHEC)).